Reading from the N-terminus, the 212-residue chain is Ras-related protein Rab-2A (212 aa).

A2 carries the post-translational modification N-acetylalanine. A required for interaction with PRKCI region spans residues 2–19; it reads AYAYLFKYIIIGDTGVGK. GTP contacts are provided by G16, V17, G18, K19, S20, C21, and T38. S20 lines the Mg(2+) pocket. The Switch 1 signature appears at 37 to 42; sequence LTIGVE. Residues T38 and D61 each contribute to the Mg(2+) site. The Switch 2 signature appears at 63-72; it reads AGQESFRSIT. Residues G64, N119, K120, D122, A150, and K151 each contribute to the GTP site. S-geranylgeranyl cysteine attachment occurs at residues C211 and C212.

The protein belongs to the small GTPase superfamily. Rab family. As to quaternary structure, interacts with PRKCI. Interacts with TRIP11. Interacts (in GTP-bound form) with GARIN1B. Interacts (GTP-bound) with HOPS complex component VPS39; interaction contributes to obtaining a functional HOPS complex that promotes autophagosome-lysosome membrane fusion driven by STX17-SNAP29-VAMP8. May interact with VPS41. It depends on Mg(2+) as a cofactor. Post-translationally, prenylated. Prenylation is required for association with cellular membranes. In terms of tissue distribution, brain and parietal cells.

It localises to the endoplasmic reticulum-Golgi intermediate compartment membrane. The protein resides in the melanosome. It is found in the endoplasmic reticulum membrane. The protein localises to the golgi apparatus membrane. Its subcellular location is the cytoplasmic vesicle. It localises to the secretory vesicle. The protein resides in the acrosome. It is found in the autophagosome membrane. It catalyses the reaction GTP + H2O = GDP + phosphate + H(+). Its activity is regulated as follows. Regulated by guanine nucleotide exchange factors (GEFs) which promote the exchange of bound GDP for free GTP, GTPase activating proteins (GAPs) which increase the GTP hydrolysis activity, and GDP dissociation inhibitors (GDIs) which inhibit the dissociation of the nucleotide from the GTPase. Its function is as follows. The small GTPases Rab are key regulators of intracellular membrane trafficking, from the formation of transport vesicles to their fusion with membranes. Rabs cycle between active GTP-bound and inactive GDP-bound states. In their active state, drive transport of vesicular carriers from donor organelles to acceptor organelles to regulate the membrane traffic that maintains organelle identity and morphology. RAB2A regulates autophagy by promoting autophagosome-lysosome fusion via recruitment of the HOPS endosomal tethering complex; this process involves autophagosomal RAB2A and lysosomal RAB39A recruitment of HOPS subcomplexes VPS39-VPS11 and VPS41-VPS16-VPS18-VPS33A, respectively, which assemble into a functional complex to mediate membrane tethering and SNAREs-driven membrane fusion. Required for protein transport from the endoplasmic reticulum to the Golgi complex. Regulates the compacted morphology of the Golgi. Together with RAB2B, redundantly required for efficient autophagic flux. In Oryctolagus cuniculus (Rabbit), this protein is Ras-related protein Rab-2A (RAB2A).